The following is a 294-amino-acid chain: UPF0718 protein YcgR (294 aa).

Transmembrane regions (helical) follow at residues 15–35 (ISIL…SGII), 54–74 (LAVL…CGII), 92–112 (AFML…YIAF), 117–137 (SVVF…GVIL), 174–194 (IDEF…AAAM), 215–235 (LVMM…AFIA), 247–267 (LIAF…MMLA), and 273–293 (FVFL…LLVK).

Belongs to the UPF0718 family.

The protein resides in the cell membrane. The polypeptide is UPF0718 protein YcgR (ycgR) (Bacillus subtilis (strain 168)).